Consider the following 227-residue polypeptide: Small ribosomal subunit protein uS3 (227 aa).

The region spanning 39 to 109 is the KH type-2 domain; the sequence is IHRFFEKLTR…KIVINVDAVD (71 aa).

This sequence belongs to the universal ribosomal protein uS3 family. As to quaternary structure, part of the 30S ribosomal subunit. Forms a tight complex with proteins S10 and S14.

Binds the lower part of the 30S subunit head. Binds mRNA in the 70S ribosome, positioning it for translation. This chain is Small ribosomal subunit protein uS3, found in Mesomycoplasma hyopneumoniae (strain 232) (Mycoplasma hyopneumoniae).